Reading from the N-terminus, the 266-residue chain is ATP synthase subunit a (266 aa).

Helical transmembrane passes span I41 to A61, V98 to L118, V119 to L139, L152 to L172, H178 to A198, L216 to W236, and A237 to V257.

The protein belongs to the ATPase A chain family. F-type ATPases have 2 components, CF(1) - the catalytic core - and CF(0) - the membrane proton channel. CF(1) has five subunits: alpha(3), beta(3), gamma(1), delta(1), epsilon(1). CF(0) has three main subunits: a(1), b(2) and c(9-12). The alpha and beta chains form an alternating ring which encloses part of the gamma chain. CF(1) is attached to CF(0) by a central stalk formed by the gamma and epsilon chains, while a peripheral stalk is formed by the delta and b chains.

It is found in the cell inner membrane. In terms of biological role, key component of the proton channel; it plays a direct role in the translocation of protons across the membrane. This is ATP synthase subunit a from Halorhodospira halophila (strain DSM 244 / SL1) (Ectothiorhodospira halophila (strain DSM 244 / SL1)).